The following is a 146-amino-acid chain: VHWTADEKQLITSLWGKVNVEECGSEALARLLIVYPWTQRFFSTFGNLSNAEAILHNPHVHAHGKKVLTSFGEAVKNLDHIKQTFATLSKLHCEKLHVDPENFKLLGNVLIIVLASHFTKEFTPACQAAWQKLVSAVAHALALGYH.

The region spanning histidine 2–histidine 146 is the Globin domain. The heme b site is built by histidine 63 and histidine 92.

The protein belongs to the globin family. As to quaternary structure, heterotetramer of two alpha chains and two beta chains. As to expression, red blood cells.

In terms of biological role, involved in oxygen transport from the lung to the various peripheral tissues. The protein is Hemoglobin subunit beta (HBB) of Chrysemys picta bellii (Western painted turtle).